The chain runs to 441 residues: Probable dihydroorotase-like protein (441 aa).

Residues 121–140 (VNAHHQPPGDPQAENRPDSA) form a disordered region.

It belongs to the metallo-dependent hydrolases superfamily. DHOase family. PyrC' subfamily.

In terms of biological role, non-functional DHOase. The sequence is that of Probable dihydroorotase-like protein (pyrC') from Synechocystis sp. (strain ATCC 27184 / PCC 6803 / Kazusa).